The chain runs to 527 residues: MSDLLSRRLALLGAAANLPLLTECLHGIERECLRVDSDGKLALTPHPRALGSTLTHPQITTDYSEALLEFITPTETDVADTLADLERIHRFASSKLDGEYLWSPSMPCELPDEESIPIARYGSSLIGRLKYVYRKGLALRYGKTMQCIAGIHYNFSLPERLWPLLRQAEGSELSERDYQSAAYIALIRNFRRYSWLLMYLFGASPALDAGFLRGRPSQLERLDEHTLYLPYATSLRMSDLGYQNNAQAGLTPCYNDLQSYIDSLRQAVSTPYPPYEKVGTKQDGEWVQLNTNILQIENEYYSSIRPKRVTYTGERPVQALAARGVQYVEVRCLDINPFLPLGIDLDEARFLDAFLLFCAFSDSPLLNGECSDATDNFLAVVKEGRRPGLQLQRRGQPVELQVWANELLERIADTAALLDRARGGEAHAAALAAQRAKVADAELTPSAQVLKVMRERGESFEAFSLRQSREHAEYFRQHPLAAEEQARFEKMASDSLAEQTELERDQDGDFDTFVAAYQASILGLISN.

Belongs to the glutamate--cysteine ligase type 1 family. Type 1 subfamily.

It catalyses the reaction L-cysteine + L-glutamate + ATP = gamma-L-glutamyl-L-cysteine + ADP + phosphate + H(+). The protein operates within sulfur metabolism; glutathione biosynthesis; glutathione from L-cysteine and L-glutamate: step 1/2. The polypeptide is Glutamate--cysteine ligase (Pseudomonas aeruginosa (strain LESB58)).